We begin with the raw amino-acid sequence, 130 residues long: Protein ApaG (130 aa).

The ApaG domain occupies 3–127 (RALTRDIEVT…FSLDSPGLVR (125 aa)).

This chain is Protein ApaG, found in Rhizobium meliloti (strain 1021) (Ensifer meliloti).